The following is a 168-amino-acid chain: Peptidoglycan-associated lipoprotein (168 aa).

The first 21 residues, 1 to 21, serve as a signal peptide directing secretion; sequence MEMLKFGKFAALALAMAVAVG. A lipid anchor (N-palmitoyl cysteine) is attached at C22. C22 carries S-diacylglycerol cysteine lipidation. The OmpA-like domain maps to 56-168; that stretch reads SDEAALRAIT…AQNRRVELKK (113 aa). A disordered region spans residues 147 to 168; the sequence is RPVATGHDEQSWAQNRRVELKK.

It belongs to the Pal lipoprotein family. As to quaternary structure, the Tol-Pal system is composed of five core proteins: the inner membrane proteins TolA, TolQ and TolR, the periplasmic protein TolB and the outer membrane protein Pal. They form a network linking the inner and outer membranes and the peptidoglycan layer.

Its subcellular location is the cell outer membrane. Functionally, part of the Tol-Pal system, which plays a role in outer membrane invagination during cell division and is important for maintaining outer membrane integrity. This chain is Peptidoglycan-associated lipoprotein, found in Pseudomonas aeruginosa (strain ATCC 15692 / DSM 22644 / CIP 104116 / JCM 14847 / LMG 12228 / 1C / PRS 101 / PAO1).